A 297-amino-acid chain; its full sequence is Farnesyl diphosphate synthase (297 aa).

Residues Lys47, Arg50, and His79 each coordinate isopentenyl diphosphate. Positions 86 and 92 each coordinate Mg(2+). Arg97 provides a ligand contact to (2E)-geranyl diphosphate. Arg98 contacts isopentenyl diphosphate. The (2E)-geranyl diphosphate site is built by Lys183, Thr184, Gln221, and Lys238.

It belongs to the FPP/GGPP synthase family. The cofactor is Mg(2+).

The protein resides in the cytoplasm. It carries out the reaction isopentenyl diphosphate + (2E)-geranyl diphosphate = (2E,6E)-farnesyl diphosphate + diphosphate. In Geobacillus stearothermophilus (Bacillus stearothermophilus), this protein is Farnesyl diphosphate synthase.